The sequence spans 344 residues: uncharacterized protein (344 aa).

Positions 221-249 (IQAQSMDEQKQIQEIYQNVEKLKEDVTKN) form a coiled coil.

This sequence belongs to the IIV-6 287R family.

This is an uncharacterized protein from Aedes vexans (Inland floodwater mosquito).